Reading from the N-terminus, the 284-residue chain is MARLLDGRSVAAQIRAEVAEGVSELKRRGVPVRLDVILAGEDPASVTYVSNKRRDCAEVGIESRLHAFPADVPQKELLALVERLNGDPEVSGFFIQLPLPGGVDPLPLLSAIDPSKDVDGLSPQSAGRLAVGLPSLLPCTPHGVIQLLRRSGVGLEGREAVVVGRSNLVGKPLALLLLRENATVTVCHSRTRDLAGVTRRAEVLVVAAGRRGMVGAEHVREGAVVVDVGIHRAEDGGLTGDVRQEEVAARAAALTPVPGGVGPMTRAMLLYNTLEAARLREERA.

Residues 164-166, Ser189, and Ile230 each bind NADP(+); that span reads GRS.

Belongs to the tetrahydrofolate dehydrogenase/cyclohydrolase family. Homodimer.

It catalyses the reaction (6R)-5,10-methylene-5,6,7,8-tetrahydrofolate + NADP(+) = (6R)-5,10-methenyltetrahydrofolate + NADPH. The catalysed reaction is (6R)-5,10-methenyltetrahydrofolate + H2O = (6R)-10-formyltetrahydrofolate + H(+). It functions in the pathway one-carbon metabolism; tetrahydrofolate interconversion. Functionally, catalyzes the oxidation of 5,10-methylenetetrahydrofolate to 5,10-methenyltetrahydrofolate and then the hydrolysis of 5,10-methenyltetrahydrofolate to 10-formyltetrahydrofolate. This chain is Bifunctional protein FolD 1, found in Rubrobacter xylanophilus (strain DSM 9941 / JCM 11954 / NBRC 16129 / PRD-1).